A 360-amino-acid polypeptide reads, in one-letter code: Mitogen-activated protein kinase 1 (360 aa).

Ala-2 is subject to N-acetylalanine. The Protein kinase domain maps to 25-313; the sequence is YTNLSYIGEG…VEQALAHPYL (289 aa). Phosphoserine; by SGK1 is present on Ser-29. Residues 31–39 and Lys-54 each bind ATP; that span reads IGEGAYGMV. The Proton acceptor role is filled by Asp-149. Residue Thr-185 is modified to Phosphothreonine; by MAP2K1 and MAP2K2. Residues 185–187 carry the TXY motif; it reads TEY. Position 187 is a phosphotyrosine; by MAP2K1 and MAP2K2 (Tyr-187). At Thr-190 the chain carries Phosphothreonine; by autocatalysis. 3 positions are modified to phosphoserine: Ser-246, Ser-248, and Ser-284.

The protein belongs to the protein kinase superfamily. CMGC Ser/Thr protein kinase family. MAP kinase subfamily. As to quaternary structure, binds both upstream activators and downstream substrates in multimolecular complexes. Interacts with ADAM15, ARHGEF2, ARRB2, DAPK1 (via death domain), HSF4, IER3, IPO7, MKNK2, MORG1, NISCH, PEA15, SGK1, and isoform 1 of NEK2. Interacts (via phosphorylated form) with TPR (via C-terminal region and phosphorylated form); the interaction requires dimerization of MAPK1/ERK2 and increases following EGF stimulation. Interacts with MAP2K1. Interacts with DUSP6. Interacts (phosphorylated form) with CAV2 ('Tyr-19'-phosphorylated form); the interaction, promoted by insulin, leads to nuclear location and MAPK1 activation. MKNK2 isoform 1 binding prevents from dephosphorylation and inactivation. Interacts with DCC. The phosphorylated form interacts with PML. Interacts with STYX. Interacts with CDK2AP2. Interacts with CAVIN4. Interacts with DUSP7; the interaction enhances DUSP7 phosphatase activity. Interacts with GIT1; this interaction is necessary for MAPK1 localization to focal adhesions. Interacts with ZNF263. Interacts with phosphoglycerate kinase PGK1; the interaction is direct, occurs under hypoxic conditions, and promotes interaction between PGK1 and PIN1. Mg(2+) serves as cofactor. In terms of processing, dually phosphorylated on Thr-185 and Tyr-187, which activates the enzyme. Phosphorylated upon FLT3 and KIT signaling. Phosphorylation on Ser-29 by SGK1 results in its activation by enhancing its interaction with MAP2K1/MEK1 and MAP2K2/MEK2. Phosphorylation at Ser-246 and Ser-248 as well as autophosphorylation at Thr-190 promote nuclear localization. Ligand-activated ALK induces tyrosine phosphorylation. Dephosphorylated by PTPRJ at Tyr-187. Dephosphorylated by DUSP1 and DUSP2 at Thr-185 and Tyr-187. ISGylated. Post-translationally, ubiquitinated by TRIM15 via 'Lys-63'-linked ubiquitination; leading to activation. Deubiquitinated by CYLD.

It is found in the nucleus. The protein resides in the cytoplasm. It localises to the cytoskeleton. The protein localises to the microtubule organizing center. Its subcellular location is the centrosome. It is found in the spindle. The protein resides in the membrane. It localises to the caveola. The protein localises to the cell junction. Its subcellular location is the focal adhesion. It catalyses the reaction L-seryl-[protein] + ATP = O-phospho-L-seryl-[protein] + ADP + H(+). The enzyme catalyses L-threonyl-[protein] + ATP = O-phospho-L-threonyl-[protein] + ADP + H(+). Phosphorylated by MAP2K1/MEK1 and MAP2K2/MEK2 on Thr-185 and Tyr-187 in response to external stimuli like insulin or NGF. Both phosphorylations are required for activity. This phosphorylation causes dramatic conformational changes, which enable full activation and interaction of MAPK1/ERK2 with its substrates. Phosphorylation on Ser-29 by SGK1 results in its activation by enhancing its interaction with MAP2K1/MEK1 and MAP2K2/MEK2. Dephosphorylated and inactivated by DUSP1, DUSP3, DUSP6 and DUSP9. Inactivated by pyrimidylpyrrole inhibitors. Serine/threonine kinase which acts as an essential component of the MAP kinase signal transduction pathway. MAPK1/ERK2 and MAPK3/ERK1 are the 2 MAPKs which play an important role in the MAPK/ERK cascade. They participate also in a signaling cascade initiated by activated KIT and KITLG/SCF. Depending on the cellular context, the MAPK/ERK cascade mediates diverse biological functions such as cell growth, adhesion, survival and differentiation through the regulation of transcription, translation, cytoskeletal rearrangements. The MAPK/ERK cascade also plays a role in initiation and regulation of meiosis, mitosis, and postmitotic functions in differentiated cells by phosphorylating a number of transcription factors. About 160 substrates have already been discovered for ERKs. Many of these substrates are localized in the nucleus, and seem to participate in the regulation of transcription upon stimulation. However, other substrates are found in the cytosol as well as in other cellular organelles, and those are responsible for processes such as translation, mitosis and apoptosis. Moreover, the MAPK/ERK cascade is also involved in the regulation of the endosomal dynamics, including lysosome processing and endosome cycling through the perinuclear recycling compartment (PNRC); as well as in the fragmentation of the Golgi apparatus during mitosis. The substrates include transcription factors (such as ATF2, BCL6, ELK1, ERF, FOS, HSF4 or SPZ1), cytoskeletal elements (such as CANX, CTTN, GJA1, MAP2, MAPT, PXN, SORBS3 or STMN1), regulators of apoptosis (such as BAD, BTG2, CASP9, DAPK1, IER3, MCL1 or PPARG), regulators of translation (such as EIF4EBP1 and FXR1) and a variety of other signaling-related molecules (like ARHGEF2, DCC, FRS2 or GRB10). Protein kinases (such as RAF1, RPS6KA1/RSK1, RPS6KA3/RSK2, RPS6KA2/RSK3, RPS6KA6/RSK4, SYK, MKNK1/MNK1, MKNK2/MNK2, RPS6KA5/MSK1, RPS6KA4/MSK2, MAPKAPK3 or MAPKAPK5) and phosphatases (such as DUSP1, DUSP4, DUSP6 or DUSP16) are other substrates which enable the propagation the MAPK/ERK signal to additional cytosolic and nuclear targets, thereby extending the specificity of the cascade. Mediates phosphorylation of TPR in response to EGF stimulation. May play a role in the spindle assembly checkpoint. Phosphorylates PML and promotes its interaction with PIN1, leading to PML degradation. Phosphorylates CDK2AP2. Phosphorylates phosphoglycerate kinase PGK1 under hypoxic conditions to promote its targeting to the mitochondrion and suppress the formation of acetyl-coenzyme A from pyruvate. Its function is as follows. Acts as a transcriptional repressor. Binds to a [GC]AAA[GC] consensus sequence. Repress the expression of interferon gamma-induced genes. Seems to bind to the promoter of CCL5, DMP1, IFIH1, IFITM1, IRF7, IRF9, LAMP3, OAS1, OAS2, OAS3 and STAT1. Transcriptional activity is independent of kinase activity. The sequence is that of Mitogen-activated protein kinase 1 from Bos taurus (Bovine).